A 229-amino-acid polypeptide reads, in one-letter code: 2-C-methyl-D-erythritol 4-phosphate cytidylyltransferase (229 aa).

This sequence belongs to the IspD/TarI cytidylyltransferase family. IspD subfamily.

The catalysed reaction is 2-C-methyl-D-erythritol 4-phosphate + CTP + H(+) = 4-CDP-2-C-methyl-D-erythritol + diphosphate. It participates in isoprenoid biosynthesis; isopentenyl diphosphate biosynthesis via DXP pathway; isopentenyl diphosphate from 1-deoxy-D-xylulose 5-phosphate: step 2/6. Catalyzes the formation of 4-diphosphocytidyl-2-C-methyl-D-erythritol from CTP and 2-C-methyl-D-erythritol 4-phosphate (MEP). The polypeptide is 2-C-methyl-D-erythritol 4-phosphate cytidylyltransferase (Neisseria meningitidis serogroup C (strain 053442)).